A 239-amino-acid chain; its full sequence is Leucine-rich repeat-containing protein 57 (239 aa).

Residue G2 is the site of N-myristoyl glycine attachment. 8 LRR repeats span residues 39 to 60 (NLRTIDLSNNKIDSLPPLIIGK), 63 to 85 (LLKSLSLNNNKLTVLPDELCNLK), 86 to 107 (KLETLSLNNNHLRELPSTFGQL), 109 to 130 (ALKTLSLSGNQLGALPPQLCCL), 132 to 153 (HLDVVDLSKNQIRSIPDTVGEL), 154 to 175 (QAIELNLNQNQISQLSVKISCC), 177 to 197 (RLKVLRLEENCLELSMLPQSI), and 202 to 222 (QICLLAVEGNLFEIKKFRELE).

It localises to the membrane. The chain is Leucine-rich repeat-containing protein 57 (Lrrc57) from Mus musculus (Mouse).